Consider the following 490-residue polypeptide: MTSKSSPLIFERSREGRYAYSLPISDIKTNSVESLLDDKFIRKNKAEFPEVAELDLVRHYTELSNKNFGVDNGFYPLGSCTMKYNPKINEKVARIPGFSESHPLQDEDQVQGSLEIIYSLQEELKEITGMDEVTLQPAAGAHGEWTALMIFKAYHENNGEGHRDEVIVPDSAHGTNPASASFAGFKSVTVKSNERGEVDIDDLKRVVNENTAAIMLTNPNTLGIFEKNIMEIREIVHNAGGLLYYDGANLNAIMDKVRPGDMGFDAVHLNLHKTFTGPHGGGGPGSGPVGVVKELASYLPKPMVIKDGDKFKYDNDIKNSIGRVKPFYGNFGIYLRAYTYIRTMGATGLKEVSEAAVLNANYIKARLSEHFEIPYKQYCKHEFVLSGVRQKEFGVRTLDMAKRLLDFGVHPPTIYFPLNVEEGMMIEPTETESKETLDYFIDTLISIAEEAKNDPDKVLEAPYTTVIDRLDEATAARKPILKFENLKQEK.

The residue at position 273 (Lys273) is an N6-(pyridoxal phosphate)lysine.

It belongs to the GcvP family. C-terminal subunit subfamily. As to quaternary structure, the glycine cleavage system is composed of four proteins: P, T, L and H. In this organism, the P 'protein' is a heterodimer of two subunits. It depends on pyridoxal 5'-phosphate as a cofactor.

It catalyses the reaction N(6)-[(R)-lipoyl]-L-lysyl-[glycine-cleavage complex H protein] + glycine + H(+) = N(6)-[(R)-S(8)-aminomethyldihydrolipoyl]-L-lysyl-[glycine-cleavage complex H protein] + CO2. Functionally, the glycine cleavage system catalyzes the degradation of glycine. The P protein binds the alpha-amino group of glycine through its pyridoxal phosphate cofactor; CO(2) is released and the remaining methylamine moiety is then transferred to the lipoamide cofactor of the H protein. This chain is Probable glycine dehydrogenase (decarboxylating) subunit 2, found in Staphylococcus aureus (strain MRSA252).